The following is a 455-amino-acid chain: Succinyl-CoA--L-malate CoA-transferase alpha subunit (455 aa).

Residues 1-58 (MAKASRLTRSTGQPTEVSEGQVTGTSEMPPTGEEPSGHAESKPPASDPMSTPGTGQEQ) form a disordered region. Polar residues-rich tracts occupy residues 7 to 28 (LTRSTGQPTEVSEGQVTGTSEM) and 48 to 58 (PMSTPGTGQEQ). The Nucleophile role is filled by aspartate 227.

Belongs to the CoA-transferase III family. In terms of assembly, forms a large complex composed of six heterodimers (alpha, beta).

The catalysed reaction is succinyl-CoA + (S)-malate = (S)-malyl-CoA + succinate. It catalyses the reaction (3S)-citramalate + succinyl-CoA = (3S)-citramalyl-CoA + succinate. Its function is as follows. Involved in the 3-hydroxypropionate cycle used for autotrophic carbon dioxide fixation. Catalyzes the transfer of CoA moiety from succinyl-CoA to L-malate to yield L-malyl-CoA. The polypeptide is Succinyl-CoA--L-malate CoA-transferase alpha subunit (smtA) (Chloroflexus aurantiacus (strain ATCC 29366 / DSM 635 / J-10-fl)).